Consider the following 893-residue polypeptide: cGMP-specific 3',5'-cyclic phosphodiesterase (893 aa).

GAF domains are found at residues 21-173 (DIDV…GIGI) and 205-390 (NLEC…GLGI). A PDEase domain is found at 420 to 743 (GQDQTEKLIQ…RNWQDLAEKV (324 aa)). The active-site Proton donor is the His496. 4 residues coordinate a divalent metal cation: His500, His536, Asp537, and Asp647. Disordered regions lie at residues 784–807 (QQSQ…RLSI) and 844–893 (HVSE…CALL). 2 stretches are compositionally biased toward basic and acidic residues: residues 789-800 (GGDDSHTPEHQR) and 844-853 (HVSEDMDDKS). Residues 864 to 880 (SVGRMSASSSTSSAGTV) are compositionally biased toward low complexity. Over residues 883 to 893 (SKKRSKLCALL) the composition is skewed to basic residues. Cys890 carries the cysteine methyl ester modification. Cys890 carries the S-farnesyl cysteine lipid modification. The propeptide at 891–893 (ALL) is removed in mature form.

This sequence belongs to the cyclic nucleotide phosphodiesterase family. As to quaternary structure, interacts with PrBP. It depends on a divalent metal cation as a cofactor.

Its subcellular location is the cell membrane. The enzyme catalyses 3',5'-cyclic GMP + H2O = GMP + H(+). Its function is as follows. Has a role regulating cGMP transport in Malpighian tubule principal cells. This chain is cGMP-specific 3',5'-cyclic phosphodiesterase, found in Drosophila virilis (Fruit fly).